The chain runs to 341 residues: MALVPKIRNRTISDKPVSSSCTRTSSFRQRLLASCKRFLRFKLLVRASSVSLKKKAARCSQSQQVVKHNDDRIEEHSSSNRGFKDGNNFLVSSTETKKLVAFCGEPFQPLNEEEVALVNSALSKRNRKKILVSHKNSNIDISGETLQCLRPNQWLNDDVTNLYLELLKERQTRDPQKYFKCHFFNTFFYVKLVSGSGYNYKAVSRWTTKRKLGYDLIDCDIIFVPIHIDIHWTLGVINNRERKFVYLDSLFTGVGHTILNAMAKYLVDEVKQKSQKNIDVSSWGMEYVEERPQQQNGYDCGMFMLKYIDFYSRGLSLQFSQKDMPYFRLRTAKEILRLRAD.

Active-site residues include His231, Asp248, and Cys300.

The protein belongs to the peptidase C48 family.

Its function is as follows. Protease that catalyzes two essential functions in the SUMO pathway: processing of full-length SUMOs to their mature forms and deconjugation of SUMO from targeted proteins. The chain is Putative ubiquitin-like-specific protease 1B (ULP1B) from Arabidopsis thaliana (Mouse-ear cress).